Consider the following 405-residue polypeptide: Phosphopentomutase (405 aa).

Mn(2+)-binding residues include D10, D303, H308, D344, H345, and H356.

The protein belongs to the phosphopentomutase family. Requires Mn(2+) as cofactor.

Its subcellular location is the cytoplasm. It catalyses the reaction 2-deoxy-alpha-D-ribose 1-phosphate = 2-deoxy-D-ribose 5-phosphate. The enzyme catalyses alpha-D-ribose 1-phosphate = D-ribose 5-phosphate. It participates in carbohydrate degradation; 2-deoxy-D-ribose 1-phosphate degradation; D-glyceraldehyde 3-phosphate and acetaldehyde from 2-deoxy-alpha-D-ribose 1-phosphate: step 1/2. In terms of biological role, isomerase that catalyzes the conversion of deoxy-ribose 1-phosphate (dRib-1-P) and ribose 1-phosphate (Rib-1-P) to deoxy-ribose 5-phosphate (dRib-5-P) and ribose 5-phosphate (Rib-5-P), respectively. The polypeptide is Phosphopentomutase (Shewanella pealeana (strain ATCC 700345 / ANG-SQ1)).